The primary structure comprises 140 residues: Fluoride-specific ion channel FluC 1 (140 aa).

Transmembrane regions (helical) follow at residues 45–65 (IPSL…IGFL), 82–102 (FLGA…TQTI), and 106–126 (LFYG…GVFI). Na(+)-binding residues include glycine 89 and threonine 92.

Belongs to the fluoride channel Fluc/FEX (TC 1.A.43) family.

Its subcellular location is the cell membrane. The enzyme catalyses fluoride(in) = fluoride(out). With respect to regulation, na(+) is not transported, but it plays an essential structural role and its presence is essential for fluoride channel function. Functionally, fluoride-specific ion channel. Important for reducing fluoride concentration in the cell, thus reducing its toxicity. This chain is Fluoride-specific ion channel FluC 1, found in Methanospirillum hungatei JF-1 (strain ATCC 27890 / DSM 864 / NBRC 100397 / JF-1).